A 646-amino-acid polypeptide reads, in one-letter code: WW domain-containing adapter protein with coiled-coil (646 aa).

The segment at 1–138 (MVMYARKQQR…YDSADDWSEH (138 aa)) is disordered. The segment covering 23–37 (QPFQALKYSSKSHPS) has biased composition (polar residues). Residues 38-50 (SGDHRHEKMRDAA) show a composition bias toward basic and acidic residues. Ser-53 carries the phosphoserine modification. The segment covering 61–75 (RSNSPENKYSDSTGH) has biased composition (polar residues). Residues 103–122 (NHSALHSSNSHSSNPSNNPS) are compositionally biased toward low complexity. The region spanning 129-162 (YDSADDWSEHISSSGKKYYYNCRTEVSQWEKPKE) is the WW domain. A phosphoserine mark is found at Ser-131 and Ser-142. Composition is skewed to basic and acidic residues over residues 158 to 174 (EKPK…KEAN) and 182 to 191 (PKDRDYRREV). Disordered regions lie at residues 158-352 (EKPK…PQST) and 428-541 (TQAQ…TATV). Over residues 211–225 (DASSLLPQNILSQTS) the composition is skewed to polar residues. Residue Ser-225 is modified to Phosphoserine. Residues 226-239 (RHNDKDYRLPRAET) show a composition bias toward basic and acidic residues. The segment covering 252 to 267 (PVVHPTATPSTVPSSP) has biased composition (low complexity). Residues 284–300 (GASTLSKLPTPTASLPA) show a composition bias toward polar residues. Thr-293 carries the post-translational modification Phosphothreonine. Lys-302 is modified (N6-acetyllysine). Polar residues predominate over residues 316-331 (SHSCTTPSTSSASGLN). Residues 332–351 (PTSAPPTSASAVPVSPVPQS) are compositionally biased toward low complexity. The span at 428 to 463 (TQAQPSNQSPMSLTSDASSPRSYVSPRISTPQTNTV) shows a compositional bias: polar residues. Residue Ser-446 is modified to Phosphoserine. Residue Thr-471 is modified to Phosphothreonine. Residues 490-503 (VSHSATQQPVTADK) show a composition bias toward polar residues. 3 positions are modified to phosphoserine: Ser-511, Ser-523, and Ser-525. Positions 511 to 524 (SPRSLQRLSSQRSP) are enriched in low complexity. A compositionally biased stretch (polar residues) spans 528-541 (PNHTCSSNASTATV). Positions 617–643 (QATLREQRILFLRQQIKELEKLKNQNS) form a coiled coil.

Interacts (via coiled coil domain) with RNF20, RNF40 and UBE2A. Interacts (via WW domain) with RNA polymerase II. Interacts with MTOR and other components of the MTOR pathway including RPTOR, RUVBL1, RUVBL2, TTI1 and TTI2. In terms of processing, phosphorylated on tyrosine residues.

Its subcellular location is the nucleus speckle. It localises to the nucleus. Its function is as follows. Acts as a linker between gene transcription and histone H2B monoubiquitination at 'Lys-120' (H2BK120ub1). Interacts with the RNA polymerase II transcriptional machinery via its WW domain and with RNF20-RNF40 via its coiled coil region, thereby linking and regulating H2BK120ub1 and gene transcription. Regulates the cell-cycle checkpoint activation in response to DNA damage. Positive regulator of amino acid starvation-induced autophagy. Also acts as a negative regulator of basal autophagy. Positively regulates MTOR activity by promoting, in an energy-dependent manner, the assembly of the TTT complex composed of TELO2, TTI1 and TTI2 and the RUVBL complex composed of RUVBL1 and RUVBL2 into the TTT-RUVBL complex. This leads to the dimerization of the mTORC1 complex and its subsequent activation. May negatively regulate the ubiquitin proteasome pathway. The polypeptide is WW domain-containing adapter protein with coiled-coil (Wac) (Mus musculus (Mouse)).